A 296-amino-acid polypeptide reads, in one-letter code: Small ribosomal subunit protein uS2 (296 aa).

Residues 245 to 296 are disordered; that stretch reads WEAPAAGFAGATGTGWDGAAGDEWGAAPATTEWAASAAPAAASGEAAKETTW. Residues 263–289 are compositionally biased toward low complexity; the sequence is AAGDEWGAAPATTEWAASAAPAAASGE.

This sequence belongs to the universal ribosomal protein uS2 family. As to quaternary structure, component of the small ribosomal subunit. Mature ribosomes consist of a small (40S) and a large (60S) subunit. The 40S subunit contains about 33 different proteins and 1 molecule of RNA (18S). The 60S subunit contains about 49 different proteins and 3 molecules of RNA (25S, 5.8S and 5S). Interacts with RPS21.

Its subcellular location is the cytoplasm. Its function is as follows. Required for the assembly and/or stability of the 40S ribosomal subunit. Required for the processing of the 20S rRNA-precursor to mature 18S rRNA in a late step of the maturation of 40S ribosomal subunits. This chain is Small ribosomal subunit protein uS2, found in Fusarium vanettenii (strain ATCC MYA-4622 / CBS 123669 / FGSC 9596 / NRRL 45880 / 77-13-4) (Fusarium solani subsp. pisi).